A 282-amino-acid chain; its full sequence is Pantothenate synthetase (282 aa).

30 to 37 (MGYLHEGH) contributes to the ATP binding site. Histidine 37 serves as the catalytic Proton donor. Glutamine 61 provides a ligand contact to (R)-pantoate. Position 61 (glutamine 61) interacts with beta-alanine. 147-150 (GMKD) provides a ligand contact to ATP. Glutamine 153 contributes to the (R)-pantoate binding site. ATP is bound by residues valine 176 and 184–187 (KSSR).

This sequence belongs to the pantothenate synthetase family. Homodimer.

It localises to the cytoplasm. The catalysed reaction is (R)-pantoate + beta-alanine + ATP = (R)-pantothenate + AMP + diphosphate + H(+). It participates in cofactor biosynthesis; (R)-pantothenate biosynthesis; (R)-pantothenate from (R)-pantoate and beta-alanine: step 1/1. In terms of biological role, catalyzes the condensation of pantoate with beta-alanine in an ATP-dependent reaction via a pantoyl-adenylate intermediate. In Bacillus cytotoxicus (strain DSM 22905 / CIP 110041 / 391-98 / NVH 391-98), this protein is Pantothenate synthetase.